The following is a 143-amino-acid chain: Large ribosomal subunit protein uL13 (143 aa).

It belongs to the universal ribosomal protein uL13 family. Part of the 50S ribosomal subunit.

Functionally, this protein is one of the early assembly proteins of the 50S ribosomal subunit, although it is not seen to bind rRNA by itself. It is important during the early stages of 50S assembly. This is Large ribosomal subunit protein uL13 from Neisseria meningitidis serogroup C (strain 053442).